Consider the following 503-residue polypeptide: AMP phosphorylase (503 aa).

Residues G168, S194–S199, and T203 contribute to the AMP site. Residue D256 is the Proton donor of the active site. S264 and K288 together coordinate AMP.

Belongs to the thymidine/pyrimidine-nucleoside phosphorylase family. Type 2 subfamily.

The enzyme catalyses AMP + phosphate = alpha-D-ribose 1,5-bisphosphate + adenine. The catalysed reaction is CMP + phosphate = cytosine + alpha-D-ribose 1,5-bisphosphate. It carries out the reaction UMP + phosphate = alpha-D-ribose 1,5-bisphosphate + uracil. Its function is as follows. Catalyzes the conversion of AMP and phosphate to adenine and ribose 1,5-bisphosphate (R15P). Exhibits phosphorylase activity toward CMP and UMP in addition to AMP. Functions in an archaeal AMP degradation pathway, together with R15P isomerase and RubisCO. The sequence is that of AMP phosphorylase from Pyrococcus furiosus (strain ATCC 43587 / DSM 3638 / JCM 8422 / Vc1).